Here is a 291-residue protein sequence, read N- to C-terminus: ATP synthase gamma chain (291 aa).

This sequence belongs to the ATPase gamma chain family. F-type ATPases have 2 components, CF(1) - the catalytic core - and CF(0) - the membrane proton channel. CF(1) has five subunits: alpha(3), beta(3), gamma(1), delta(1), epsilon(1). CF(0) has three main subunits: a, b and c.

The protein localises to the cell inner membrane. Its function is as follows. Produces ATP from ADP in the presence of a proton gradient across the membrane. The gamma chain is believed to be important in regulating ATPase activity and the flow of protons through the CF(0) complex. The polypeptide is ATP synthase gamma chain (Neisseria meningitidis serogroup C / serotype 2a (strain ATCC 700532 / DSM 15464 / FAM18)).